Consider the following 202-residue polypeptide: LexA repressor (202 aa).

The H-T-H motif DNA-binding region spans 28-48 (RAEIAQRLGFRSPNAAEEHLK). Residues S119 and K156 each act as for autocatalytic cleavage activity in the active site.

Belongs to the peptidase S24 family. Homodimer.

It carries out the reaction Hydrolysis of Ala-|-Gly bond in repressor LexA.. Its function is as follows. Represses a number of genes involved in the response to DNA damage (SOS response), including recA and lexA. Binds to the 16 bp palindromic sequence 5'-CTGTATATATATACAG-3'. In the presence of single-stranded DNA, RecA interacts with LexA causing an autocatalytic cleavage which disrupts the DNA-binding part of LexA, leading to derepression of the SOS regulon and eventually DNA repair. This Escherichia coli (strain K12 / MC4100 / BW2952) protein is LexA repressor.